We begin with the raw amino-acid sequence, 822 residues long: MQAKSKTESRAEYCTGYSEDVDVIREREYPFLKDTTYLDHAGTTLYPKSLIDSFARDLTSNLFGNPHSRSSSSQLSTQRIDDIRLRALRFFNADPDEFDLVFVANATAAIKLVVDVFRDSSPQGFWYGYFIDAHTSLVGAREIAERGHRCFLTSGEVERWIADLATDQKNFPRLFAYPGQSNLNGRRSPMQWCKKIRDGSSGAGNVYTLLDAASLVSTSPLDLSDASAAPDFTALSFYKIFGFPDLGALIVRKSAAGIIKKRKFFGGGTVDMVLAQGMPWHAKKSTIHECLEDGTLPFHNIIALDSALSTHGRLFGSMSNVSFHTRYLAKRLHNRLAAMTHFNGQKVCHLYMSPESDFDNSTQGPIIAFNIRNSSGAWIGKSEVERLANVKKIHIRSGSHCNSGGTATSLGWTGPELLRNFSAGLRCGDDHDVMDGRPTGILRVSLGAVSNLRDIDAFARFIDEFYIEKEPEFVSLVPPMEVVLQEPSFYVESLSVYPIKSCGAFKVPDGQRWEIKREGLAWDREWCLIHQGTGAALSMKKYPRMALIRPVIDLERGVLRITCGSDSKELEVSLRREITNLVTTSLCQSAKSSNVCGDRVVVQAYSSPTVASFFSNFLGVPCTLARFPPQISTRISNPTRSSRRSQRALMPGSFPEDPSPTSEQPPILLSNESPILLISRSSVNRLNENIKYNPRPSYSTPAKAVEADVFRANIVVAENLHQLANAERPYIEDTWESFSVGPEQLCFDVLGSCQRCQMVCVDPYTGTRREEPYSTLVKTRKINSKIVFGRHTSLSNMELSQGAGKPKSCTVMVGDVVTPQIA.

Residue Lys-239 is modified to N6-(pyridoxal phosphate)lysine. Cys-401 is an active-site residue. Residues Thr-633–Pro-666 form a disordered region. The 178-residue stretch at Arg-643–Gln-820 folds into the MOSC domain.

It belongs to the class-V pyridoxal-phosphate-dependent aminotransferase family. MOCOS subfamily. The cofactor is pyridoxal 5'-phosphate.

The catalysed reaction is Mo-molybdopterin + L-cysteine + AH2 = thio-Mo-molybdopterin + L-alanine + A + H2O. It participates in cofactor biosynthesis; molybdopterin biosynthesis. Sulfurates the molybdenum cofactor. Sulfation of molybdenum is essential for xanthine dehydrogenase (XDH) and aldehyde oxidase (ADO) enzymes in which molybdenum cofactor is liganded by 1 oxygen and 1 sulfur atom in active form. The protein is Molybdenum cofactor sulfurase of Aspergillus oryzae (strain ATCC 42149 / RIB 40) (Yellow koji mold).